Reading from the N-terminus, the 488-residue chain is Probable glycine dehydrogenase (decarboxylating) subunit 2 (488 aa).

N6-(pyridoxal phosphate)lysine is present on Lys274.

Belongs to the GcvP family. C-terminal subunit subfamily. As to quaternary structure, the glycine cleavage system is composed of four proteins: P, T, L and H. In this organism, the P 'protein' is a heterodimer of two subunits. Requires pyridoxal 5'-phosphate as cofactor.

It carries out the reaction N(6)-[(R)-lipoyl]-L-lysyl-[glycine-cleavage complex H protein] + glycine + H(+) = N(6)-[(R)-S(8)-aminomethyldihydrolipoyl]-L-lysyl-[glycine-cleavage complex H protein] + CO2. Functionally, the glycine cleavage system catalyzes the degradation of glycine. The P protein binds the alpha-amino group of glycine through its pyridoxal phosphate cofactor; CO(2) is released and the remaining methylamine moiety is then transferred to the lipoamide cofactor of the H protein. The protein is Probable glycine dehydrogenase (decarboxylating) subunit 2 of Listeria monocytogenes serovar 1/2a (strain ATCC BAA-679 / EGD-e).